Consider the following 20-residue polypeptide: Astacin-like peptidase p18 (20 aa).

In terms of domain architecture, Peptidase M12A spans 1–20 (NAIPGNYYRWPYAKVPYVID).

It depends on Zn(2+) as a cofactor.

Its function is as follows. Active against casein. Has a role as a digestive enzyme. This chain is Astacin-like peptidase p18, found in Argiope aurantia (Black-and-yellow garden spider).